Here is a 263-residue protein sequence, read N- to C-terminus: 3-methyl-2-oxobutanoate hydroxymethyltransferase (263 aa).

Residues Asp44 and Asp83 each contribute to the Mg(2+) site. 3-methyl-2-oxobutanoate is bound by residues 44–45 (DS), Asp83, and Lys113. Glu115 contributes to the Mg(2+) binding site. Residue Glu183 is the Proton acceptor of the active site.

The protein belongs to the PanB family. Homodecamer; pentamer of dimers. Mg(2+) serves as cofactor.

Its subcellular location is the cytoplasm. It carries out the reaction 3-methyl-2-oxobutanoate + (6R)-5,10-methylene-5,6,7,8-tetrahydrofolate + H2O = 2-dehydropantoate + (6S)-5,6,7,8-tetrahydrofolate. It participates in cofactor biosynthesis; (R)-pantothenate biosynthesis; (R)-pantoate from 3-methyl-2-oxobutanoate: step 1/2. Its function is as follows. Catalyzes the reversible reaction in which hydroxymethyl group from 5,10-methylenetetrahydrofolate is transferred onto alpha-ketoisovalerate to form ketopantoate. This Trichodesmium erythraeum (strain IMS101) protein is 3-methyl-2-oxobutanoate hydroxymethyltransferase.